The primary structure comprises 30 residues: Glucagon-like peptide (30 aa).

Arg30 bears the Arginine amide mark.

This sequence belongs to the glucagon family.

The protein resides in the secreted. The chain is Glucagon-like peptide from Anguilla anguilla (European freshwater eel).